The sequence spans 177 residues: Inner membrane protein p22 (177 aa).

The Intravirion portion of the chain corresponds to 1–7 (MFNIKMT). A helical transmembrane segment spans residues 8-28 (ISVLLIALIVLLIIILVVFLY). Over 29 to 177 (YKKQQPPKKV…IALPRNHKHA (149 aa)) the chain is Virion surface.

This sequence belongs to the asfivirus inner membrane protein p22 family.

It localises to the virion membrane. Its subcellular location is the host cell membrane. In African swine fever virus (isolate Warthog/Namibia/Wart80/1980) (ASFV), this protein is Inner membrane protein p22.